We begin with the raw amino-acid sequence, 608 residues long: Kelch-like protein 10 (608 aa).

A BTB domain is found at 39–106; it reads CDVVIKVNGF…AYTRTVPITP (68 aa). Kelch repeat units follow at residues 292-339, 340-386, 388-433, 434-480, 481-527, and 529-574; these read ILFA…YLKG, YVYI…VLGN, IYAM…TLYG, KVYI…AYGE, HVYA…VVDD, and LFVV…VVPG. S501 is modified (phosphoserine).

As to quaternary structure, self-associates. Interacts with CUL3; indicative for the participation in an E3 ubiquitin ligase complex.

The protein resides in the cytoplasm. It functions in the pathway protein modification; protein ubiquitination. In terms of biological role, may be a substrate-specific adapter of a CUL3-based E3 ubiquitin-protein ligase complex which mediates the ubiquitination and subsequent proteasomal degradation of target proteins during spermatogenesis. This Homo sapiens (Human) protein is Kelch-like protein 10 (KLHL10).